The chain runs to 351 residues: S-adenosylmethionine:tRNA ribosyltransferase-isomerase (351 aa).

This sequence belongs to the QueA family. As to quaternary structure, monomer.

The protein localises to the cytoplasm. The enzyme catalyses 7-aminomethyl-7-carbaguanosine(34) in tRNA + S-adenosyl-L-methionine = epoxyqueuosine(34) in tRNA + adenine + L-methionine + 2 H(+). Its pathway is tRNA modification; tRNA-queuosine biosynthesis. Transfers and isomerizes the ribose moiety from AdoMet to the 7-aminomethyl group of 7-deazaguanine (preQ1-tRNA) to give epoxyqueuosine (oQ-tRNA). This Phocaeicola vulgatus (strain ATCC 8482 / DSM 1447 / JCM 5826 / CCUG 4940 / NBRC 14291 / NCTC 11154) (Bacteroides vulgatus) protein is S-adenosylmethionine:tRNA ribosyltransferase-isomerase.